A 547-amino-acid polypeptide reads, in one-letter code: Chaperonin GroEL (547 aa).

ATP is bound by residues 30 to 33 (TLGP), lysine 51, 87 to 91 (DGTTT), glycine 415, 479 to 481 (NAA), and aspartate 495. The disordered stretch occupies residues 526-547 (KKDEPTPPAAGGGMGGMGGMDF). Positions 535–547 (AGGGMGGMGGMDF) are enriched in gly residues.

It belongs to the chaperonin (HSP60) family. In terms of assembly, forms a cylinder of 14 subunits composed of two heptameric rings stacked back-to-back. Interacts with the co-chaperonin GroES.

It is found in the cytoplasm. It catalyses the reaction ATP + H2O + a folded polypeptide = ADP + phosphate + an unfolded polypeptide.. In terms of biological role, together with its co-chaperonin GroES, plays an essential role in assisting protein folding. The GroEL-GroES system forms a nano-cage that allows encapsulation of the non-native substrate proteins and provides a physical environment optimized to promote and accelerate protein folding. The polypeptide is Chaperonin GroEL (Xylella fastidiosa (strain M12)).